Reading from the N-terminus, the 314-residue chain is Small glutamine-rich tetratricopeptide repeat-containing protein alpha (314 aa).

Residues 65–99 are disordered; that stretch reads ATASKEMPQDPRGPDRTPPSEEDSAEAERLKTEGN. Residues 71-83 are compositionally biased toward basic and acidic residues; the sequence is MPQDPRGPDRTPP. Phosphothreonine is present on threonine 81. Serine 84 carries the phosphoserine modification. The segment covering 90 to 99 has biased composition (basic and acidic residues); sequence EAERLKTEGN. 3 TPR repeats span residues 91–124, 125–158, and 159–192; these read AERL…NPAN, AVYF…DPGY, and SKAY…DPDN. At lysine 137 the chain carries N6-acetyllysine. The disordered stretch occupies residues 249–268; it reads GMISGGHNPLGTPGSSPQHS. Serine 302 bears the Phosphoserine mark. Threonine 304 bears the Phosphothreonine mark. Serine 306 is subject to Phosphoserine.

This sequence belongs to the SGT family. Homodimer. Homooligomer. Interacts with DNAJC5 and DNAJC5B. Interacts (via TPR repeats) with HSP90AA1. Interacts (via Gln-rich region) with SLC2A1. Interacts with HSP90AB1. Interacts (via TPR repeats) with HSPA8/Hsc70; the interaction is direct. Interacts with BAG6 (via ubiquitin-like domain); interaction prevents interaction between BAG6 and RNF126. Forms a multiprotein complex, at least composed of DNAJB12, DNAJB14, HSPA8/Hsc70 and SGTA; interaction with DNAJB14 and HSPA8/Hsc70 is direct. As to quaternary structure, (Microbial infection) Interacts with NS1 from parvovirus H-1. In terms of tissue distribution, ubiquitously expressed.

It is found in the cytoplasm. Its subcellular location is the nucleus. Co-chaperone that binds misfolded and hydrophobic patches-containing client proteins in the cytosol. Mediates their targeting to the endoplasmic reticulum but also regulates their sorting to the proteasome when targeting fails. Functions in tail-anchored/type II transmembrane proteins membrane insertion constituting with ASNA1 and the BAG6 complex a targeting module. Functions upstream of the BAG6 complex and ASNA1, binding more rapidly the transmembrane domain of newly synthesized proteins. It is also involved in the regulation of the endoplasmic reticulum-associated misfolded protein catabolic process via its interaction with BAG6: collaborates with the BAG6 complex to maintain hydrophobic substrates in non-ubiquitinated states. Competes with RNF126 for interaction with BAG6, preventing the ubiquitination of client proteins associated with the BAG6 complex. Binds directly to HSC70 and HSP70 and regulates their ATPase activity. This Rattus norvegicus (Rat) protein is Small glutamine-rich tetratricopeptide repeat-containing protein alpha (Sgta).